The chain runs to 355 residues: Protein RecA (355 aa).

Gly-72–Thr-79 contributes to the ATP binding site.

It belongs to the RecA family.

It localises to the cytoplasm. Can catalyze the hydrolysis of ATP in the presence of single-stranded DNA, the ATP-dependent uptake of single-stranded DNA by duplex DNA, and the ATP-dependent hybridization of homologous single-stranded DNAs. It interacts with LexA causing its activation and leading to its autocatalytic cleavage. The polypeptide is Protein RecA (Wolbachia sp. subsp. Drosophila simulans (strain wRi)).